A 1241-amino-acid chain; its full sequence is Phosphorylase b kinase regulatory subunit alpha, skeletal muscle isoform (1241 aa).

Phosphoserine occurs at positions 629, 730, 736, 739, 759, 812, 973, 982, and 986. The interval 811 to 841 (LSELYVKVGEIRHWGLIRYISGILRKKVEAL) is calmodulin-binding. Phosphoserine; by autocatalysis is present on Ser1008. Ser1019 carries the post-translational modification Phosphoserine; by PKA. Phosphoserine occurs at positions 1021 and 1024. A calmodulin-binding region spans residues 1064 to 1104 (SKDSRQGQWQRRRRLDGALNRVPIGFYQKVWKILQKCHGLS). Phosphoserine is present on Ser1131. Residue Cys1238 is the site of S-farnesyl cysteine attachment.

The protein belongs to the phosphorylase b kinase regulatory chain family. Hexadecamer of 4 heterotetramers, each composed of alpha, beta, gamma, and delta subunits. Alpha (PHKA1 or PHKA2) and beta (PHKB) are regulatory subunits, gamma (PHKG1 or PHKG2) is the catalytic subunit, and delta is calmodulin. Post-translationally, although the final Cys may be farnesylated, the terminal tripeptide is probably not removed, and the C-terminus is not methylated. In terms of tissue distribution, both isoforms are expressed in muscle.

The protein resides in the cell membrane. Its pathway is glycan biosynthesis; glycogen metabolism. By phosphorylation of various serine residues and by calcium. Functionally, phosphorylase b kinase catalyzes the phosphorylation of serine in certain substrates, including troponin I. The alpha chain may bind calmodulin. This Mus musculus (Mouse) protein is Phosphorylase b kinase regulatory subunit alpha, skeletal muscle isoform (Phka1).